The sequence spans 237 residues: Uridylate kinase (237 aa).

12-15 (KLSG) provides a ligand contact to ATP. The interval 20 to 25 (GENGFG) is involved in allosteric activation by GTP. G54 is a UMP binding site. Positions 55 and 59 each coordinate ATP. UMP-binding positions include D72 and 133-140 (TGNPYFST). Residues Y166 and D169 each coordinate ATP.

The protein belongs to the UMP kinase family. In terms of assembly, homohexamer.

It localises to the cytoplasm. It catalyses the reaction UMP + ATP = UDP + ADP. The protein operates within pyrimidine metabolism; CTP biosynthesis via de novo pathway; UDP from UMP (UMPK route): step 1/1. Allosterically activated by GTP. Inhibited by UTP. Its function is as follows. Catalyzes the reversible phosphorylation of UMP to UDP. This Clostridium perfringens (strain SM101 / Type A) protein is Uridylate kinase.